Here is a 288-residue protein sequence, read N- to C-terminus: Cyclin-dependent kinase 2 homolog (288 aa).

The region spanning 4 to 284 (YHGLEKIGEG…AKQALEHAYF (281 aa)) is the Protein kinase domain. Residues 10–18 (IGEGTYGVV) and K32 contribute to the ATP site. The residue at position 14 (T14) is a Phosphothreonine. Y15 carries the phosphotyrosine modification. D125 functions as the Proton acceptor in the catalytic mechanism. Phosphothreonine is present on T158.

The protein belongs to the protein kinase superfamily. CMGC Ser/Thr protein kinase family. CDC2/CDKX subfamily. As to quaternary structure, may form a complex composed of at least the catalytic subunit CRK2 and a cyclin. Requires Mg(2+) as cofactor. Post-translationally, autophosphorylates in presence of cyclin cyc-1 but not in presence of cyclin cyc-3.

The protein resides in the cytoplasm. It carries out the reaction L-seryl-[protein] + ATP = O-phospho-L-seryl-[protein] + ADP + H(+). The enzyme catalyses L-threonyl-[protein] + ATP = O-phospho-L-threonyl-[protein] + ADP + H(+). It catalyses the reaction [DNA-directed RNA polymerase] + ATP = phospho-[DNA-directed RNA polymerase] + ADP + H(+). With respect to regulation, phosphorylation at Thr-14 or Tyr-15 inactivates the enzyme, while phosphorylation at Thr-158 activates it. Activated by cyclin cyc-1 in vitro. Activated by cyclin cyc-3 in vitro. In terms of biological role, serine/threonine-protein kinase. Involved in the control of the cell cycle. Required for entry into S-phase and mitosis. Probable component of the kinase complex that phosphorylates the repetitive C-terminus of RNA polymerase II. In schizonts, phosphorylates ORC1 resulting in its dissociation from DNA, relocalization to the cytoplasm and likely its degradation. The polypeptide is Cyclin-dependent kinase 2 homolog (Plasmodium falciparum (isolate 3D7)).